The chain runs to 307 residues: Glycine--tRNA ligase alpha subunit (307 aa).

This sequence belongs to the class-II aminoacyl-tRNA synthetase family. Tetramer of two alpha and two beta subunits.

It localises to the cytoplasm. The catalysed reaction is tRNA(Gly) + glycine + ATP = glycyl-tRNA(Gly) + AMP + diphosphate. This Aeromonas hydrophila subsp. hydrophila (strain ATCC 7966 / DSM 30187 / BCRC 13018 / CCUG 14551 / JCM 1027 / KCTC 2358 / NCIMB 9240 / NCTC 8049) protein is Glycine--tRNA ligase alpha subunit.